A 244-amino-acid chain; its full sequence is 1-(5-phosphoribosyl)-5-[(5-phosphoribosylamino)methylideneamino] imidazole-4-carboxamide isomerase (244 aa).

Asp10 functions as the Proton acceptor in the catalytic mechanism. Residue Asp132 is the Proton donor of the active site.

This sequence belongs to the HisA/HisF family.

It is found in the cytoplasm. It carries out the reaction 1-(5-phospho-beta-D-ribosyl)-5-[(5-phospho-beta-D-ribosylamino)methylideneamino]imidazole-4-carboxamide = 5-[(5-phospho-1-deoxy-D-ribulos-1-ylimino)methylamino]-1-(5-phospho-beta-D-ribosyl)imidazole-4-carboxamide. The protein operates within amino-acid biosynthesis; L-histidine biosynthesis; L-histidine from 5-phospho-alpha-D-ribose 1-diphosphate: step 4/9. This is 1-(5-phosphoribosyl)-5-[(5-phosphoribosylamino)methylideneamino] imidazole-4-carboxamide isomerase from Stenotrophomonas maltophilia (strain K279a).